Consider the following 247-residue polypeptide: Adenosylcobinamide-GDP ribazoletransferase (247 aa).

5 helical membrane passes run 34-54 (IVMFPFIGLILGGISGLIFIL), 59-79 (CGIPLAALFCILALALLTGGF), 113-133 (GGLALIFVLLAKILVVSELAL), 138-158 (MLAALAAACAAGRGSAVLLMY), and 194-214 (VLLLGMQGLATMVVTLAAIFI).

It belongs to the CobS family. It depends on Mg(2+) as a cofactor.

It localises to the cell inner membrane. It carries out the reaction alpha-ribazole + adenosylcob(III)inamide-GDP = adenosylcob(III)alamin + GMP + H(+). The catalysed reaction is alpha-ribazole 5'-phosphate + adenosylcob(III)inamide-GDP = adenosylcob(III)alamin 5'-phosphate + GMP + H(+). Its pathway is cofactor biosynthesis; adenosylcobalamin biosynthesis; adenosylcobalamin from cob(II)yrinate a,c-diamide: step 7/7. Functionally, joins adenosylcobinamide-GDP and alpha-ribazole to generate adenosylcobalamin (Ado-cobalamin). Also synthesizes adenosylcobalamin 5'-phosphate from adenosylcobinamide-GDP and alpha-ribazole 5'-phosphate. The polypeptide is Adenosylcobinamide-GDP ribazoletransferase (Salmonella typhi).